Reading from the N-terminus, the 334-residue chain is Holliday junction branch migration complex subunit RuvB (334 aa).

The interval 4-184 is large ATPase domain (RuvB-L); that stretch reads ADRLIQPQDL…FGIPLRLEFY (181 aa). ATP contacts are provided by residues Arg-24, Gly-65, Lys-68, Thr-69, Thr-70, 131 to 133, Arg-174, Tyr-184, and Arg-221; that span reads EDY. Thr-69 is a binding site for Mg(2+). Residues 185 to 255 form a small ATPAse domain (RuvB-S) region; that stretch reads NVRDLSSIVA…VAQSALDLLD (71 aa). The head domain (RuvB-H) stretch occupies residues 258-334; sequence SEGFDYMDRK…YSHFDLIKPD (77 aa). DNA is bound by residues Arg-294, Arg-313, and Arg-318.

Belongs to the RuvB family. In terms of assembly, homohexamer. Forms an RuvA(8)-RuvB(12)-Holliday junction (HJ) complex. HJ DNA is sandwiched between 2 RuvA tetramers; dsDNA enters through RuvA and exits via RuvB. An RuvB hexamer assembles on each DNA strand where it exits the tetramer. Each RuvB hexamer is contacted by two RuvA subunits (via domain III) on 2 adjacent RuvB subunits; this complex drives branch migration. In the full resolvosome a probable DNA-RuvA(4)-RuvB(12)-RuvC(2) complex forms which resolves the HJ.

It is found in the cytoplasm. It catalyses the reaction ATP + H2O = ADP + phosphate + H(+). Its function is as follows. The RuvA-RuvB-RuvC complex processes Holliday junction (HJ) DNA during genetic recombination and DNA repair, while the RuvA-RuvB complex plays an important role in the rescue of blocked DNA replication forks via replication fork reversal (RFR). RuvA specifically binds to HJ cruciform DNA, conferring on it an open structure. The RuvB hexamer acts as an ATP-dependent pump, pulling dsDNA into and through the RuvAB complex. RuvB forms 2 homohexamers on either side of HJ DNA bound by 1 or 2 RuvA tetramers; 4 subunits per hexamer contact DNA at a time. Coordinated motions by a converter formed by DNA-disengaged RuvB subunits stimulates ATP hydrolysis and nucleotide exchange. Immobilization of the converter enables RuvB to convert the ATP-contained energy into a lever motion, pulling 2 nucleotides of DNA out of the RuvA tetramer per ATP hydrolyzed, thus driving DNA branch migration. The RuvB motors rotate together with the DNA substrate, which together with the progressing nucleotide cycle form the mechanistic basis for DNA recombination by continuous HJ branch migration. Branch migration allows RuvC to scan DNA until it finds its consensus sequence, where it cleaves and resolves cruciform DNA. The polypeptide is Holliday junction branch migration complex subunit RuvB (Shewanella amazonensis (strain ATCC BAA-1098 / SB2B)).